The sequence spans 242 residues: UPF0309 protein BSUIS_B0903 (242 aa).

One can recognise an SIS domain in the interval 30–214; the sequence is AADLIAAAAR…ARLVGEGDAP (185 aa).

It belongs to the UPF0309 family.

This chain is UPF0309 protein BSUIS_B0903, found in Brucella suis (strain ATCC 23445 / NCTC 10510).